The sequence spans 423 residues: Putative serpin-Z12 (423 aa).

The disordered stretch occupies residues 1 to 25 (MAALAAGEPFSGRATGGDGGVRSDV). Residues 370–394 (GTVAAASTAVVMMQKGSSLPPVDFV) form an RCL region.

It belongs to the serpin family.

Functionally, probable serine protease inhibitor. The polypeptide is Putative serpin-Z12 (Oryza sativa subsp. japonica (Rice)).